We begin with the raw amino-acid sequence, 88 residues long: Small ribosomal subunit protein uS15c (88 aa).

This sequence belongs to the universal ribosomal protein uS15 family. As to quaternary structure, part of the 30S ribosomal subunit.

Its subcellular location is the plastid. The protein localises to the chloroplast. In Lepidium virginicum (Virginia pepperweed), this protein is Small ribosomal subunit protein uS15c (rps15).